The primary structure comprises 293 residues: MATEVSQLLLAVVQGIPAGATNDDLTKALPDVPAATRVEALNILLQEGGIEILKKGEKLVYRAKDPEKKSALPKDADNEEKVVYGIVEEGGNKGIWIRDIRMKSNLNMIQLNKILKNLETKKLIKAVKSVNASKKKVYMLYNLEPDLSITGGAWYQDQDFEVEFVDVLNQQCLRFLQMKRDSAEKKREGPLAFKQMSCCTVNEVQKFISDLGISKVNLAEADLETILKTVVYDGNAERVRQQDGSFVYRAVNAPLPPTGLVQMPCGICPVIKNCSNCGDVTAITCEYMRDWLD.

This sequence belongs to the eukaryotic RPC34/RPC39 RNA polymerase subunit family. As to quaternary structure, component of the RNA polymerase III (Pol III) complex consisting of 17 subunits.

It is found in the nucleus. Functionally, DNA-dependent RNA polymerase catalyzes the transcription of DNA into RNA using the four ribonucleoside triphosphates as substrates. Specific peripheric component of RNA polymerase III which synthesizes small RNAs, such as 5S rRNA and tRNAs. The chain is DNA-directed RNA polymerase III subunit RPC6 from Drosophila melanogaster (Fruit fly).